Reading from the N-terminus, the 800-residue chain is Metabotropic glutamate receptor-like protein C (800 aa).

The first 21 residues, 1–21 (MKMKIIFLILILIFSINIIKC), serve as a signal peptide directing secretion. Residues 22 to 392 (DKEFKMLTLL…EVEFSQSLQY (371 aa)) are Extracellular-facing. Residues N69, N107, N166, N258, N276, N302, and N345 are each glycosylated (N-linked (GlcNAc...) asparagine). A helical membrane pass occupies residues 393-413 (GFSITTGVLIAITIIMMLGIV). The Cytoplasmic segment spans residues 414–426 (RYKSTPSIRSASP). Residues 427–447 (IFLNFILAGGIIVYIGIIVWV) traverse the membrane as a helical segment. At 448 to 463 (GPANDHQCNARLWLVT) the chain is on the extracellular side. The helical transmembrane segment at 464-484 (LGFSTLIGSLVVKNFRIWLIF) threads the bilayer. Over 485–499 (DNPELKSISITNYQL) the chain is Cytoplasmic. The chain crosses the membrane as a helical span at residues 500–520 (FPWVGACLVINIILMSILTSV). The Extracellular portion of the chain corresponds to 521–551 (GDLREIDAQGIDSLGKYEFMKVCKMNSSGAS). A glycan (N-linked (GlcNAc...) asparagine) is linked at N546. Residues 552–572 (TLYTILAYFAALLLVGVFVSW) traverse the membrane as a helical segment. At 573 to 586 (KIRIVDIQEFNESK) the chain is on the cytoplasmic side. The helical transmembrane segment at 587-607 (AIANTLYAISFCLFVIVPLMI) threads the bilayer. The Extracellular segment spans residues 608 to 616 (SPQDKQSET). Residues 617–637 (IVLCTAGLFITTAALLIIFTP) traverse the membrane as a helical segment. The Cytoplasmic portion of the chain corresponds to 638–800 (KFWRVFTLGD…NDTEEEDKNQ (163 aa)). 2 disordered regions span residues 658–694 (QSNV…TETS) and 718–800 (EFDD…DKNQ). Acidic residues predominate over residues 718–732 (EFDDNNIEQDNDNDN). Positions 733-774 (DNNNNNNNNNNNNNNNNNNNNNNNNNNNNNNNNNNNNNNNNN) are enriched in low complexity. Basic and acidic residues predominate over residues 781–791 (NDEKVEEKQQN).

The protein in the N-terminal section; belongs to the BMP lipoprotein family. In the C-terminal section; belongs to the G-protein coupled receptor 3 family. GABA-B receptor subfamily.

The protein localises to the membrane. This Dictyostelium discoideum (Social amoeba) protein is Metabotropic glutamate receptor-like protein C (grlC).